We begin with the raw amino-acid sequence, 253 residues long: Phosphoadenosine 5'-phosphosulfate reductase (253 aa).

The Nucleophile; cysteine thiosulfonate intermediate role is filled by Cys239.

This sequence belongs to the PAPS reductase family. CysH subfamily.

The protein resides in the cytoplasm. The catalysed reaction is [thioredoxin]-disulfide + sulfite + adenosine 3',5'-bisphosphate + 2 H(+) = [thioredoxin]-dithiol + 3'-phosphoadenylyl sulfate. It functions in the pathway sulfur metabolism; hydrogen sulfide biosynthesis; sulfite from sulfate: step 3/3. In terms of biological role, catalyzes the formation of sulfite from phosphoadenosine 5'-phosphosulfate (PAPS) using thioredoxin as an electron donor. The sequence is that of Phosphoadenosine 5'-phosphosulfate reductase from Aliivibrio fischeri (strain ATCC 700601 / ES114) (Vibrio fischeri).